We begin with the raw amino-acid sequence, 449 residues long: Ribosomal protein uS12 methylthiotransferase RimO (449 aa).

The region spanning P15–P125 is the MTTase N-terminal domain. [4Fe-4S] cluster-binding residues include C24, C60, C89, C156, C160, and C163. Residues L142–R379 enclose the Radical SAM core domain. The TRAM domain occupies K382–G448.

It belongs to the methylthiotransferase family. RimO subfamily. [4Fe-4S] cluster is required as a cofactor.

It localises to the cytoplasm. The catalysed reaction is L-aspartate(89)-[ribosomal protein uS12]-hydrogen + (sulfur carrier)-SH + AH2 + 2 S-adenosyl-L-methionine = 3-methylsulfanyl-L-aspartate(89)-[ribosomal protein uS12]-hydrogen + (sulfur carrier)-H + 5'-deoxyadenosine + L-methionine + A + S-adenosyl-L-homocysteine + 2 H(+). Functionally, catalyzes the methylthiolation of an aspartic acid residue of ribosomal protein uS12. This chain is Ribosomal protein uS12 methylthiotransferase RimO, found in Xanthobacter autotrophicus (strain ATCC BAA-1158 / Py2).